The following is a 375-amino-acid chain: Enoyl-[acyl-carrier-protein] reductase, mitochondrial (375 aa).

Residues 1-37 constitute a mitochondrion transit peptide; that stretch reads MAALMESVVGRALKFSSTANFRSIRRGETPTLCIKSF. Tyrosine 96 functions as the Proton donor in the catalytic mechanism. NADP(+)-binding positions include asparagine 169, 195 to 198, 218 to 220, 287 to 290, 312 to 314, and lysine 370; these read TSIV, RDR, YGGM, and FWL.

It belongs to the zinc-containing alcohol dehydrogenase family. Quinone oxidoreductase subfamily. As to quaternary structure, homodimer.

It is found in the mitochondrion. The catalysed reaction is a 2,3-saturated acyl-[ACP] + NADP(+) = a (2E)-enoyl-[ACP] + NADPH + H(+). In terms of biological role, catalyzes the NADPH-dependent reduction of trans-2-enoyl thioesters in mitochondrial fatty acid synthesis (fatty acid synthesis type II). Fatty acid chain elongation in mitochondria uses acyl carrier protein (ACP) as an acyl group carrier, but the enzyme accepts both ACP and CoA thioesters as substrates in vitro. The chain is Enoyl-[acyl-carrier-protein] reductase, mitochondrial from Arabidopsis thaliana (Mouse-ear cress).